The following is a 573-amino-acid chain: 2-isopropylmalate synthase (573 aa).

The region spanning 37–314 (PRWLSTDLRD…DPQIDFSDID (278 aa)) is the Pyruvate carboxyltransferase domain. D46, H253, H255, and N289 together coordinate Mg(2+). Residues 456-573 (NPDNPWGRIQ…VVSAVNRATR (118 aa)) form a regulatory domain region.

The protein belongs to the alpha-IPM synthase/homocitrate synthase family. LeuA type 2 subfamily. In terms of assembly, homodimer. Mg(2+) is required as a cofactor.

It is found in the cytoplasm. It carries out the reaction 3-methyl-2-oxobutanoate + acetyl-CoA + H2O = (2S)-2-isopropylmalate + CoA + H(+). It participates in amino-acid biosynthesis; L-leucine biosynthesis; L-leucine from 3-methyl-2-oxobutanoate: step 1/4. Catalyzes the condensation of the acetyl group of acetyl-CoA with 3-methyl-2-oxobutanoate (2-ketoisovalerate) to form 3-carboxy-3-hydroxy-4-methylpentanoate (2-isopropylmalate). The protein is 2-isopropylmalate synthase of Streptomyces coelicolor (strain ATCC BAA-471 / A3(2) / M145).